Consider the following 279-residue polypeptide: Undecaprenyl-diphosphatase (279 aa).

The next 8 membrane-spanning stretches (helical) occupy residues 1–21 (MVLE…LPIS), 39–59 (GRFF…LYFF), 96–116 (LLLV…VRFV), 128–148 (FTMG…DALF), 155–175 (IFQI…FAII), 201–221 (FSFL…LVAG), 231–251 (YSLI…SALL), and 259–279 (FVLF…VSFF).

The protein belongs to the UppP family.

The protein localises to the cell membrane. The enzyme catalyses di-trans,octa-cis-undecaprenyl diphosphate + H2O = di-trans,octa-cis-undecaprenyl phosphate + phosphate + H(+). Functionally, catalyzes the dephosphorylation of undecaprenyl diphosphate (UPP). Confers resistance to bacitracin. The protein is Undecaprenyl-diphosphatase of Tropheryma whipplei (strain TW08/27) (Whipple's bacillus).